The following is a 356-amino-acid chain: Tyrosine recombinase XerS (356 aa).

The 106-residue stretch at 16 to 121 folds into the Core-binding (CB) domain; sequence IMPWYVLEYY…ALSSLYKYLT (106 aa). Positions 169–354 constitute a Tyr recombinase domain; sequence GFLTYIDQEY…VNDEQKNALD (186 aa). Residues Arg-210, Lys-234, His-306, Arg-309, and His-332 contribute to the active site. The O-(3'-phospho-DNA)-tyrosine intermediate role is filled by Tyr-341.

The protein belongs to the 'phage' integrase family. XerS subfamily.

The protein localises to the cytoplasm. FtsK is required for recombination. In terms of biological role, site-specific tyrosine recombinase, which acts by catalyzing the cutting and rejoining of the recombining DNA molecules. Essential to convert dimers of the bacterial chromosome into monomers to permit their segregation at cell division. The protein is Tyrosine recombinase XerS of Streptococcus pneumoniae (strain Hungary19A-6).